Consider the following 64-residue polypeptide: Alpha-conotoxin-like Lp1.7 (64 aa).

The signal sequence occupies residues 1–21 (MGMRMMFTMFLLVVLTTTVVS). Residues 22 to 41 (FNSDRESNHENRRTSNQITR) constitute a propeptide that is removed on maturation. Cystine bridges form between C47-C53 and C48-C61. Residues 49–51 (DDP) form a lacks the Ser-Xaa-Pro motif that is crucial for potent interaction with nAChR region.

Belongs to the conotoxin A superfamily. Expressed by the venom duct.

It localises to the secreted. Functionally, alpha-conotoxins act on postsynaptic membranes, they bind to the nicotinic acetylcholine receptors (nAChR) and thus inhibit them. Has possibly a distinct nAChR binding mode from other alpha-conotoxins, due to a different three residue motif (lacks the Ser-Xaa-Pro motif). This chain is Alpha-conotoxin-like Lp1.7, found in Conus leopardus (Leopard cone).